Consider the following 269-residue polypeptide: Surfeit locus protein 4 (269 aa).

Transmembrane regions (helical) follow at residues L64–V84, Y92–W112, F179–F199, L203–W223, and F239–G259. Positions K266–W269 match the Di-lysine motif motif.

The protein belongs to the SURF4 family. Found in a complex composed at least of SURF4, TMED2 and TMED10. May interact with LMAN1. Interacts with ZFYVE27 and with KIF5A in a ZFYVE27-dependent manner. Interacts with STING1. Interacts with SAR1B. Interacts with TMEM41B.

The protein resides in the endoplasmic reticulum membrane. The protein localises to the endoplasmic reticulum-Golgi intermediate compartment membrane. It is found in the golgi apparatus membrane. Its function is as follows. Endoplasmic reticulum cargo receptor that mediates the export of lipoproteins by recruiting cargos into COPII vesicles to facilitate their secretion. Acts as a cargo receptor for lipoproteins bearing both APOB and APOA1, thereby regulating lipoprotein delivery and the maintenance of lipid homeostasis. Synergizes with the GTPase SAR1B to mediate transport of circulating lipoproteins. Promotes the secretion of PCSK9. Also mediates the efficient secretion of erythropoietin (EPO). May also play a role in the maintenance of the architecture of the endoplasmic reticulum-Golgi intermediate compartment and of the Golgi. This Bos taurus (Bovine) protein is Surfeit locus protein 4.